A 114-amino-acid chain; its full sequence is U5-lycotoxin-Ls1a (114 aa).

The N-terminal stretch at 1–20 is a signal peptide; sequence MKYQILFGVVFLTLLSYCYS. The propeptide occupies 21–45; sequence EIEDEFENFVDEEMVEADDPFSLAR. 3 disulfide bridges follow: Cys-51-Cys-66, Cys-65-Cys-93, and Cys-77-Cys-91.

Belongs to the neurotoxin 19 (CSTX) family. 04 (U1-Lctx) subfamily. In terms of tissue distribution, expressed by the venom gland.

The protein resides in the secreted. The protein is U5-lycotoxin-Ls1a of Lycosa singoriensis (Wolf spider).